Reading from the N-terminus, the 367-residue chain is GTP cyclohydrolase FolE2 (367 aa).

This sequence belongs to the GTP cyclohydrolase IV family.

The catalysed reaction is GTP + H2O = 7,8-dihydroneopterin 3'-triphosphate + formate + H(+). Its pathway is cofactor biosynthesis; 7,8-dihydroneopterin triphosphate biosynthesis; 7,8-dihydroneopterin triphosphate from GTP: step 1/1. In terms of biological role, converts GTP to 7,8-dihydroneopterin triphosphate. The protein is GTP cyclohydrolase FolE2 of Ruegeria sp. (strain TM1040) (Silicibacter sp.).